The following is a 102-amino-acid chain: Monothiol glutaredoxin-S5 (102 aa).

The Glutaredoxin domain occupies 1 to 101; it reads MENLQKMISE…PMLKRAGALW (101 aa). Cysteine 21 serves as a coordination point for [2Fe-2S] cluster. Residues 99 to 102 carry the Responsive for interaction with TGA factors motif; that stretch reads ALWL.

This sequence belongs to the glutaredoxin family. CC-type subfamily.

The protein resides in the cytoplasm. Its subcellular location is the nucleus. May only reduce GSH-thiol disulfides, but not protein disulfides. In Arabidopsis thaliana (Mouse-ear cress), this protein is Monothiol glutaredoxin-S5 (GRXS5).